Consider the following 249-residue polypeptide: O-methyltransferase adaD (249 aa).

Low complexity predominate over residues 1 to 15 (MSSVTLTTTTTTTST). Residues 1-26 (MSSVTLTTTTTTTSTPPKPTPKDEPQ) are disordered.

The protein belongs to the methyltransferase superfamily.

It carries out the reaction 2-acetyl-3,4a,8,10,11,12a-hexahydroxy-1,4,4a,5,12,12a-hexahydrotetracene-1,12-dione + S-adenosyl-L-methionine = TAN-1612 + S-adenosyl-L-homocysteine + H(+). It participates in secondary metabolite biosynthesis. In terms of biological role, O-methyltransferase; part of the gene cluster that mediates the biosynthesis of the linear tetracyclic TAN-1612 neuropeptide Y receptor antagonist. The decaketide backbone of TAN-1612 is synthesized by the non-reducing polyketide synthase adaA via condensation of one acetyl-CoA starter unit with 9 malonyl-CoA units. The FAD-dependent monooxygenase adaC then performs hydroxylation at C2 while the polaketide chain is still attached to the NRPKS adaA. The alpha-hydroxylation step at C2 appears to be crucial for the following C18-C1 Claisen cyclization and release of the C9-hydroxyl version of TAN-1612 from the NRPKS adaA, two steps performed by the lactamase-like protein adaB. Finally, the O-methyltransferase adaD performs the C9 O-methylation to complete the biosynthesis of TAN-1612. This Aspergillus niger protein is O-methyltransferase adaD.